Reading from the N-terminus, the 420-residue chain is Glutamyl-tRNA reductase (420 aa).

Residues 49–52, Ser107, 112–114, and Gln118 contribute to the substrate site; these read TCNR and EPQ. Cys50 functions as the Nucleophile in the catalytic mechanism. 187–192 is a binding site for NADP(+); sequence GAGETI.

The protein belongs to the glutamyl-tRNA reductase family. In terms of assembly, homodimer.

It carries out the reaction (S)-4-amino-5-oxopentanoate + tRNA(Glu) + NADP(+) = L-glutamyl-tRNA(Glu) + NADPH + H(+). The protein operates within porphyrin-containing compound metabolism; protoporphyrin-IX biosynthesis; 5-aminolevulinate from L-glutamyl-tRNA(Glu): step 1/2. Catalyzes the NADPH-dependent reduction of glutamyl-tRNA(Glu) to glutamate 1-semialdehyde (GSA). The sequence is that of Glutamyl-tRNA reductase from Methylococcus capsulatus (strain ATCC 33009 / NCIMB 11132 / Bath).